A 441-amino-acid polypeptide reads, in one-letter code: Methylenetetrahydrofolate--tRNA-(uracil-5-)-methyltransferase TrmFO (441 aa).

An FAD-binding site is contributed by 11-16; it reads GAGLAG.

It belongs to the MnmG family. TrmFO subfamily. FAD serves as cofactor.

It localises to the cytoplasm. The enzyme catalyses uridine(54) in tRNA + (6R)-5,10-methylene-5,6,7,8-tetrahydrofolate + NADH + H(+) = 5-methyluridine(54) in tRNA + (6S)-5,6,7,8-tetrahydrofolate + NAD(+). The catalysed reaction is uridine(54) in tRNA + (6R)-5,10-methylene-5,6,7,8-tetrahydrofolate + NADPH + H(+) = 5-methyluridine(54) in tRNA + (6S)-5,6,7,8-tetrahydrofolate + NADP(+). In terms of biological role, catalyzes the folate-dependent formation of 5-methyl-uridine at position 54 (M-5-U54) in all tRNAs. The chain is Methylenetetrahydrofolate--tRNA-(uracil-5-)-methyltransferase TrmFO from Lactiplantibacillus plantarum (strain ATCC BAA-793 / NCIMB 8826 / WCFS1) (Lactobacillus plantarum).